The primary structure comprises 1337 residues: Phosphoribosylformylglycinamidine synthase (1337 aa).

Position 215 is a phosphoserine (Ser-215). Residues 322 to 333 (GATTGTGGRIRD) and 402 to 404 (AGF) each bind ATP. Phosphothreonine is present on residues Thr-619 and Thr-622. ATP is bound at residue Ala-705. Asp-706, Glu-745, Asn-749, and Asp-908 together coordinate Mg(2+). Ser-910 contacts ATP. Residues 1063-1301 (RVAILREEGS…ALMPHPERAV (239 aa)) form the Glutamine amidotransferase type-1 domain. Cys-1157 acts as the Nucleophile in catalysis. Residues His-1296 and Glu-1298 contribute to the active site.

It in the N-terminal section; belongs to the FGAMS family.

Its subcellular location is the cytoplasm. The catalysed reaction is N(2)-formyl-N(1)-(5-phospho-beta-D-ribosyl)glycinamide + L-glutamine + ATP + H2O = 2-formamido-N(1)-(5-O-phospho-beta-D-ribosyl)acetamidine + L-glutamate + ADP + phosphate + H(+). It functions in the pathway purine metabolism; IMP biosynthesis via de novo pathway; 5-amino-1-(5-phospho-D-ribosyl)imidazole from N(2)-formyl-N(1)-(5-phospho-D-ribosyl)glycinamide: step 1/2. Phosphoribosylformylglycinamidine synthase involved in the purines biosynthetic pathway. Catalyzes the ATP-dependent conversion of formylglycinamide ribonucleotide (FGAR) and glutamine to yield formylglycinamidine ribonucleotide (FGAM) and glutamate. The chain is Phosphoribosylformylglycinamidine synthase (Pfas) from Mus musculus (Mouse).